We begin with the raw amino-acid sequence, 319 residues long: MSLNFLDFEQPIAELEAKIDSLTAVSRQDEKLDINIDEEVHRLREKSVELTRKIFADLGAWQVAQLARHPKRPYTLDYVRLAFDEFDELAGDRAYADDKAIVGGIARLEGRPVMIIGHQKGRETKEKIRRNFGMPAPEGYRKALRLMEMAERFNMPIITFIDTPGAYPGVGAEERGQSEAIARNLREMSRLNVPVICTVIGEGGSGGALAIGVGDKVNMLQYSTYSVISPEGCASILWKSADKAPLAAEAMGIIAPRLKELKLIDSIIPEPLGGAHRNPEAMAASLKAQLLEDLADLDVLSTDDLKNRRYQRLMSYGYA.

The 262-residue stretch at 35-296 folds into the CoA carboxyltransferase C-terminal domain; the sequence is NIDEEVHRLR…KAQLLEDLAD (262 aa).

This sequence belongs to the AccA family. In terms of assembly, acetyl-CoA carboxylase is a heterohexamer composed of biotin carboxyl carrier protein (AccB), biotin carboxylase (AccC) and two subunits each of ACCase subunit alpha (AccA) and ACCase subunit beta (AccD).

Its subcellular location is the cytoplasm. The catalysed reaction is N(6)-carboxybiotinyl-L-lysyl-[protein] + acetyl-CoA = N(6)-biotinyl-L-lysyl-[protein] + malonyl-CoA. It functions in the pathway lipid metabolism; malonyl-CoA biosynthesis; malonyl-CoA from acetyl-CoA: step 1/1. Component of the acetyl coenzyme A carboxylase (ACC) complex. First, biotin carboxylase catalyzes the carboxylation of biotin on its carrier protein (BCCP) and then the CO(2) group is transferred by the carboxyltransferase to acetyl-CoA to form malonyl-CoA. In Salmonella paratyphi C (strain RKS4594), this protein is Acetyl-coenzyme A carboxylase carboxyl transferase subunit alpha.